A 418-amino-acid chain; its full sequence is Glutamate dehydrogenase (418 aa).

Lysine 105 is an active-site residue. Residue 217 to 223 (GYGNVGY) participates in NAD(+) binding.

This sequence belongs to the Glu/Leu/Phe/Val dehydrogenases family. In terms of assembly, homohexamer.

The protein resides in the cytoplasm. It carries out the reaction L-glutamate + NAD(+) + H2O = 2-oxoglutarate + NH4(+) + NADH + H(+). The enzyme catalyses L-glutamate + NADP(+) + H2O = 2-oxoglutarate + NH4(+) + NADPH + H(+). The sequence is that of Glutamate dehydrogenase (gdhA) from Aeropyrum pernix (strain ATCC 700893 / DSM 11879 / JCM 9820 / NBRC 100138 / K1).